Here is a 235-residue protein sequence, read N- to C-terminus: (5-formylfuran-3-yl)methyl phosphate synthase (235 aa).

The active-site Schiff-base intermediate with substrate is Lys-27. The Proton acceptor role is filled by Lys-85.

It belongs to the MfnB family. Homohexamer. Trimer of dimers.

The catalysed reaction is 2 D-glyceraldehyde 3-phosphate = 4-(hydroxymethyl)-2-furancarboxaldehyde phosphate + phosphate + 2 H2O. It participates in cofactor biosynthesis; methanofuran biosynthesis. Catalyzes the formation of 4-(hydroxymethyl)-2-furancarboxaldehyde phosphate (4-HFC-P) from two molecules of glyceraldehyde-3-P (GA-3-P). The protein is (5-formylfuran-3-yl)methyl phosphate synthase of Methanocaldococcus jannaschii (strain ATCC 43067 / DSM 2661 / JAL-1 / JCM 10045 / NBRC 100440) (Methanococcus jannaschii).